The following is a 434-amino-acid chain: Nuclear receptor subfamily 1 group I member 2 (434 aa).

Positions 38-107 form a DNA-binding region, nuclear receptor; the sequence is PQICRVCGDK…RLRKCLESGM (70 aa). NR C4-type zinc fingers lie at residues 41–61 and 77–102; these read CRVC…CEGC and CPFR…LRKC. The Bipartite nuclear localization signal motif lies at 66-92; sequence RRAMKRNARLRCPFRKGACEITRKTRR. Residues 108 to 145 are hinge; that stretch reads KKEMIMSDAAVEERRALIKRKKRERIGTQPPGVQGLTE. The 288-residue stretch at 146-433 folds into the NR LBD domain; sequence EQRMMIRELM…LMQELFGITG (288 aa). Residues serine 247, 285-288, and histidine 407 contribute to the hyperforin site; that span reads QLRF.

It belongs to the nuclear hormone receptor family. NR1 subfamily. In terms of assembly, heterodimer with RXRA. Interacts with NCOA1. Interacts (via domain NR LBD) with CRY1 and CRY2 in a ligand-dependent manner.

The protein resides in the nucleus. Functionally, nuclear receptor that binds and is activated by a variety of endogenous and xenobiotic compounds. Transcription factor that activates the transcription of multiple genes involved in the metabolism and secretion of potentially harmful xenobiotics, endogenous compounds and drugs. Response to specific ligands is species-specific, due to differences in the ligand-binding domain. Activated by naturally occurring steroids, such as pregnenolone and progesterone. Binds to a response element in the promoters of the CYP3A4 and ABCB1/MDR1 genes. The protein is Nuclear receptor subfamily 1 group I member 2 (NR1I2) of Macaca mulatta (Rhesus macaque).